A 602-amino-acid chain; its full sequence is Elongation factor 4 (602 aa).

A tr-type G domain is found at 8-190; that stretch reads DLIRNFSIVA…AIVHRLPPPK (183 aa). Residues 20-25 and 137-140 each bind GTP; these read DHGKST and NKID.

It belongs to the TRAFAC class translation factor GTPase superfamily. Classic translation factor GTPase family. LepA subfamily.

The protein resides in the cell inner membrane. The enzyme catalyses GTP + H2O = GDP + phosphate + H(+). In terms of biological role, required for accurate and efficient protein synthesis under certain stress conditions. May act as a fidelity factor of the translation reaction, by catalyzing a one-codon backward translocation of tRNAs on improperly translocated ribosomes. Back-translocation proceeds from a post-translocation (POST) complex to a pre-translocation (PRE) complex, thus giving elongation factor G a second chance to translocate the tRNAs correctly. Binds to ribosomes in a GTP-dependent manner. The protein is Elongation factor 4 of Cereibacter sphaeroides (strain ATCC 17023 / DSM 158 / JCM 6121 / CCUG 31486 / LMG 2827 / NBRC 12203 / NCIMB 8253 / ATH 2.4.1.) (Rhodobacter sphaeroides).